We begin with the raw amino-acid sequence, 195 residues long: Small ribosomal subunit protein uS4 (195 aa).

Positions 92–152 (SRLDNIVYRL…EKHKHKANKN (61 aa)) constitute an S4 RNA-binding domain.

It belongs to the universal ribosomal protein uS4 family. Part of the 30S ribosomal subunit. Contacts protein S5. The interaction surface between S4 and S5 is involved in control of translational fidelity.

Its function is as follows. One of the primary rRNA binding proteins, it binds directly to 16S rRNA where it nucleates assembly of the body of the 30S subunit. With S5 and S12 plays an important role in translational accuracy. This chain is Small ribosomal subunit protein uS4, found in Karelsulcia muelleri (strain GWSS) (Sulcia muelleri).